The following is an 820-amino-acid chain: Leucine--tRNA ligase (820 aa).

Residues 42–52 carry the 'HIGH' region motif; it reads PYPSGDLHMGH. The 'KMSKS' region signature appears at 576–580; sequence KMSKS. K579 is a binding site for ATP.

This sequence belongs to the class-I aminoacyl-tRNA synthetase family.

It localises to the cytoplasm. The enzyme catalyses tRNA(Leu) + L-leucine + ATP = L-leucyl-tRNA(Leu) + AMP + diphosphate. This Coxiella burnetii (strain CbuG_Q212) (Coxiella burnetii (strain Q212)) protein is Leucine--tRNA ligase.